The sequence spans 686 residues: tRNA 5-methylaminomethyl-2-thiouridine biosynthesis bifunctional protein MnmC (686 aa).

The tRNA (mnm(5)s(2)U34)-methyltransferase stretch occupies residues 1–258 (MPNIPLRVNS…RRALRRQQLD (258 aa)). The tract at residues 276-686 (IGGGVASANL…MRKLIKGKAL (411 aa)) is FAD-dependent cmnm(5)s(2)U34 oxidoreductase.

In the N-terminal section; belongs to the methyltransferase superfamily. tRNA (mnm(5)s(2)U34)-methyltransferase family. The protein in the C-terminal section; belongs to the DAO family. It depends on FAD as a cofactor.

The protein resides in the cytoplasm. It carries out the reaction 5-aminomethyl-2-thiouridine(34) in tRNA + S-adenosyl-L-methionine = 5-methylaminomethyl-2-thiouridine(34) in tRNA + S-adenosyl-L-homocysteine + H(+). Catalyzes the last two steps in the biosynthesis of 5-methylaminomethyl-2-thiouridine (mnm(5)s(2)U) at the wobble position (U34) in tRNA. Catalyzes the FAD-dependent demodification of cmnm(5)s(2)U34 to nm(5)s(2)U34, followed by the transfer of a methyl group from S-adenosyl-L-methionine to nm(5)s(2)U34, to form mnm(5)s(2)U34. This is tRNA 5-methylaminomethyl-2-thiouridine biosynthesis bifunctional protein MnmC from Shewanella loihica (strain ATCC BAA-1088 / PV-4).